The primary structure comprises 485 residues: MDFLHKATLLEQTLNMEIGEQVKKLATYTFSNFIRCPEVQQAIASGEIRNDMPHLRFVYIFYLFKKIQDFIGDTEVFGIYEKVMGVERANSAKLVDVVQACTEMRPHIQAQICEHIERLTRGQGENVLWEVLRDGVISSSKLLKFVKQQTPDSKIFNPIPIQKNHYVASPVAFGVRNETVVKKLISELVVEEGIGCVTEFGFMLSPNDGIFGVSLDMCTNASMSDHNTVEFTSTTTIYEIKCRYKYLFSKCDYDPIYQAYQKLYNSPGRQELIDFIQSIQKPTVEYVSRGRLPTQNDYLLSFDRSWDFGPPKRKRKLTSGHKITEQCMKYNCYTESKVIILTDPALTSGKIEVKGSFFVDIYINPRHAYYHQCMLQYKIVTNYVQLTKGDSCKHTHPGVFLVSAFFRKRNSADFPKTYIKTERSFVDASVEIPVLLIITPVFVPHGPLVDTLEQAIKFWQVAVKEEFNHWPWAPTSLSAVGDVTP.

This sequence belongs to the herpesviridae alkaline nuclease family. As to quaternary structure, forms a complex with the DNA polymerase, the DNA polymerase processivity factor, and the major DNA binding protein.

It is found in the host nucleus. Its subcellular location is the host cytoplasm. Plays a role in processing non linear or branched viral DNA intermediates in order to promote the production of mature packaged unit-length linear progeny viral DNA molecules. Exhibits endonuclease and exonuclease activities and accepts both double-stranded and single-stranded DNA as substrate. Exonuclease digestion of DNA is in the 5'-&gt; 3' direction and the products are 5'-monophosphate nucleosides. Additionally, forms a recombinase with the major DNA-binding protein, which displays strand exchange activity. Also acts as a cytoplasmic RNA endonuclease that induces degradation of the majority of the cellular messenger RNAs during early lytic infection. The resulting inhibition of cellular protein synthesis serves to ensure maximal viral gene expression and evasion from host immune response. Internally cleaves host mRNAs which are then degraded by the cellular exonuclease XRN1. Bypasses therefore the regulatory steps of deadenylation and decapping normally required for XRN1 activation. This chain is Shutoff alkaline exonuclease (37), found in Alcelaphine herpesvirus 1 (strain C500) (AlHV-1).